Consider the following 151-residue polypeptide: Thymosin beta (151 aa).

A run of 4 repeats spans residues 24 to 29 (LKKVET), 62 to 67 (LHSTPV), 100 to 105 (LKKTET), and 134 to 139 (LHHVET). The 4 X 6 AA repeat of L-[KH]-[KSH]-[VT]-[EP]-[TV] stretch occupies residues 24–139 (LKKVETTEKN…DKSALHHVET (116 aa)).

The protein belongs to the thymosin beta family. As to quaternary structure, interacts (via repeats 1, 2 and 4) with G-actin in a 1:3 ratio. Interacts (via repeats 2 and 3) with F-actin. At the comma stage, enriched in the developing nerve ring (at protein level). Ubiquitously expressed in larvae and adults with enrichment in the spermatheca, the intestinal tract and the posterior bulb of the pharynx (at protein level). Expressed in oocytes and in the gonad (at protein level).

It is found in the cytoplasm. It localises to the cell cortex. The protein localises to the cell junction. Its subcellular location is the cytoskeleton. In terms of biological role, plays an important role in the organization of the cytoskeleton by regulating actin polymerization in two ways. Firstly, by binding to and sequestering actin monomers (G actin) inhibits actin polymerization. Secondly, by binding directly filamentous actin (F actin) promotes actin polymerization. Regulates the formation of cortical actin in oocytes conferring them enough rigidity to sustain the contractions during ovulation. This is Thymosin beta from Caenorhabditis elegans.